Consider the following 198-residue polypeptide: Nucleoid occlusion factor SlmA (198 aa).

Positions 10–70 (NRREEILQSL…SLIEFIEDSL (61 aa)) constitute an HTH tetR-type domain. The H-T-H motif DNA-binding region spans 33-52 (TTAKLAASVGVSEAALYRHF). Positions 117–144 (EQDRLQGRINQLFERIEAQLRQVLREKR) form a coiled coil.

It belongs to the nucleoid occlusion factor SlmA family. In terms of assembly, homodimer. Interacts with FtsZ.

It is found in the cytoplasm. Its subcellular location is the nucleoid. Required for nucleoid occlusion (NO) phenomenon, which prevents Z-ring formation and cell division over the nucleoid. Acts as a DNA-associated cell division inhibitor that binds simultaneously chromosomal DNA and FtsZ, and disrupts the assembly of FtsZ polymers. SlmA-DNA-binding sequences (SBS) are dispersed on non-Ter regions of the chromosome, preventing FtsZ polymerization at these regions. The protein is Nucleoid occlusion factor SlmA of Citrobacter koseri (strain ATCC BAA-895 / CDC 4225-83 / SGSC4696).